The sequence spans 310 residues: Phosphoribosylaminoimidazole-succinocarboxamide synthase (310 aa).

It belongs to the SAICAR synthetase family.

The enzyme catalyses 5-amino-1-(5-phospho-D-ribosyl)imidazole-4-carboxylate + L-aspartate + ATP = (2S)-2-[5-amino-1-(5-phospho-beta-D-ribosyl)imidazole-4-carboxamido]succinate + ADP + phosphate + 2 H(+). Its pathway is purine metabolism; IMP biosynthesis via de novo pathway; 5-amino-1-(5-phospho-D-ribosyl)imidazole-4-carboxamide from 5-amino-1-(5-phospho-D-ribosyl)imidazole-4-carboxylate: step 1/2. The polypeptide is Phosphoribosylaminoimidazole-succinocarboxamide synthase (Dechloromonas aromatica (strain RCB)).